The following is a 244-amino-acid chain: 14-3-3 protein beta/alpha (244 aa).

Met1 bears the N-acetylmethionine mark. Ser184 is subject to Phosphoserine.

Belongs to the 14-3-3 family. Homodimer, and heterodimer with other family members. Post-translationally, phosphorylated.

The protein localises to the cytoplasm. Adapter protein implicated in the regulation of a large spectrum of both general and specialized signaling pathways. Binds to a large number of partners, usually by recognition of a phosphoserine or phosphothreonine motif. Binding generally results in the modulation of the activity of the binding partner. This is 14-3-3 protein beta/alpha (YWHAB) from Gallus gallus (Chicken).